The primary structure comprises 556 residues: Formate--tetrahydrofolate ligase 1 (556 aa).

ATP is bound at residue 65–72 (TPAGEGKS).

It belongs to the formate--tetrahydrofolate ligase family.

The catalysed reaction is (6S)-5,6,7,8-tetrahydrofolate + formate + ATP = (6R)-10-formyltetrahydrofolate + ADP + phosphate. The protein operates within one-carbon metabolism; tetrahydrofolate interconversion. In Streptococcus pyogenes serotype M28 (strain MGAS6180), this protein is Formate--tetrahydrofolate ligase 1.